A 339-amino-acid chain; its full sequence is Phenylalanine--tRNA ligase alpha subunit (339 aa).

Glu250 contacts Mg(2+).

Belongs to the class-II aminoacyl-tRNA synthetase family. Phe-tRNA synthetase alpha subunit type 1 subfamily. Tetramer of two alpha and two beta subunits. The cofactor is Mg(2+).

It is found in the cytoplasm. It catalyses the reaction tRNA(Phe) + L-phenylalanine + ATP = L-phenylalanyl-tRNA(Phe) + AMP + diphosphate + H(+). This Bacteroides fragilis (strain ATCC 25285 / DSM 2151 / CCUG 4856 / JCM 11019 / LMG 10263 / NCTC 9343 / Onslow / VPI 2553 / EN-2) protein is Phenylalanine--tRNA ligase alpha subunit.